The primary structure comprises 376 residues: Chaperone protein DnaJ (376 aa).

A J domain is found at 5-70 (DYYEVLGVAR…NKRRMYDSHG (66 aa)). Residues 132-209 (GVERRIEIPT…CHGNGRVEED (78 aa)) form a CR-type zinc finger. Residues Cys-145, Cys-148, Cys-161, Cys-164, Cys-183, Cys-186, Cys-197, and Cys-200 each coordinate Zn(2+). 4 CXXCXGXG motif repeats span residues 145 to 152 (CGDCDGSG), 161 to 168 (CNVCHGRG), 183 to 190 (CHNCGGRG), and 197 to 204 (CKTCHGNG). The segment at 223–242 (GDRIRLSGEGEAGPAGTPPG) is disordered.

It belongs to the DnaJ family. Homodimer. Requires Zn(2+) as cofactor.

The protein resides in the cytoplasm. Functionally, participates actively in the response to hyperosmotic and heat shock by preventing the aggregation of stress-denatured proteins and by disaggregating proteins, also in an autonomous, DnaK-independent fashion. Unfolded proteins bind initially to DnaJ; upon interaction with the DnaJ-bound protein, DnaK hydrolyzes its bound ATP, resulting in the formation of a stable complex. GrpE releases ADP from DnaK; ATP binding to DnaK triggers the release of the substrate protein, thus completing the reaction cycle. Several rounds of ATP-dependent interactions between DnaJ, DnaK and GrpE are required for fully efficient folding. Also involved, together with DnaK and GrpE, in the DNA replication of plasmids through activation of initiation proteins. The polypeptide is Chaperone protein DnaJ (Stenotrophomonas maltophilia (strain R551-3)).